The chain runs to 443 residues: Chromosome partition protein MukF (443 aa).

The segment at 209–237 is leucine-zipper; sequence LDETSINLRELQDTLNAAGDKLQSQLLRI.

Belongs to the MukF family. In terms of assembly, interacts, and probably forms a ternary complex, with MukE and MukB via its C-terminal region. The complex formation is stimulated by calcium or magnesium. It is required for an interaction between MukE and MukB.

Its subcellular location is the cytoplasm. It localises to the nucleoid. In terms of biological role, involved in chromosome condensation, segregation and cell cycle progression. May participate in facilitating chromosome segregation by condensation DNA from both sides of a centrally located replisome during cell division. Not required for mini-F plasmid partitioning. Probably acts via its interaction with MukB and MukE. Overexpression results in anucleate cells. It has a calcium binding activity. The protein is Chromosome partition protein MukF of Haemophilus ducreyi (strain 35000HP / ATCC 700724).